The sequence spans 532 residues: Tyrosinase (532 aa).

An N-terminal signal peptide occupies residues 1–22; that stretch reads MESTTVLLAASTLLLVLHASYG. The Lumenal, melanosome portion of the chain corresponds to 23-479; sequence QFPRACSTAQ…LEQARQIWQW (457 aa). 3 N-linked (GlcNAc...) asparagine glycosylation sites follow: N90, N115, and N165. Positions 184, 206, and 215 each coordinate Cu cation. N-linked (GlcNAc...) asparagine glycosylation is found at N234 and N341. 2 residues coordinate Cu cation: H367 and H371. N375 carries an N-linked (GlcNAc...) asparagine glycan. Cu cation is bound at residue H394. The chain crosses the membrane as a helical span at residues 480–500; that stretch reads LLGAAVVGGLVTAVIATIISL. The Cytoplasmic portion of the chain corresponds to 501–532; it reads TCRRKRRTKTSEETRPLLMEAEDYHATYQSNL.

Belongs to the tyrosinase family. Active tyrosinase has been found as a homodimer and homotetramer. It depends on Cu(2+) as a cofactor. In terms of tissue distribution, frog skin.

The protein localises to the melanosome membrane. It carries out the reaction 2 L-dopa + O2 = 2 L-dopaquinone + 2 H2O. The enzyme catalyses L-tyrosine + O2 = L-dopaquinone + H2O. Its activity is regulated as follows. Activated by trypsin, chymotrypsin and subtilisin. Activated by alpha-chymotrypsin, thermolysin and Pronase. Inhibited by its product L-DOPA and tyrosine. In terms of biological role, this is a copper-containing oxidase that functions in the formation of pigments such as melanins and other polyphenolic compounds. Catalyzes the initial and rate limiting step in the cascade of reactions leading to melanin production from tyrosine. In addition to hydroxylating tyrosine to DOPA (3,4-dihydroxyphenylalanine), also catalyzes the oxidation of DOPA to DOPA-quinone. This is Tyrosinase from Pelophylax lessonae (Pool frog).